Consider the following 132-residue polypeptide: Sirohydrochlorin cobaltochelatase (132 aa).

The active-site Proton acceptor is the H10. Residue H10 participates in Co(2+) binding. Substrate-binding positions include R46 and 69–74 (ISYGLH). Residue H74 coordinates Co(2+).

The protein belongs to the CbiX family. CbiXS subfamily. As to quaternary structure, homotetramer; dimer of dimers.

The catalysed reaction is Co-sirohydrochlorin + 2 H(+) = sirohydrochlorin + Co(2+). Its pathway is cofactor biosynthesis; adenosylcobalamin biosynthesis; cob(II)yrinate a,c-diamide from sirohydrochlorin (anaerobic route): step 1/10. Catalyzes the insertion of Co(2+) into sirohydrochlorin as part of the anaerobic pathway to cobalamin biosynthesis. The polypeptide is Sirohydrochlorin cobaltochelatase (Archaeoglobus fulgidus (strain ATCC 49558 / DSM 4304 / JCM 9628 / NBRC 100126 / VC-16)).